The chain runs to 386 residues: Succinate--CoA ligase [ADP-forming] subunit beta (386 aa).

In terms of domain architecture, ATP-grasp spans 9 to 244; that stretch reads KAVLRSYGVS…LDEEDSKEIE (236 aa). ATP-binding positions include lysine 46, 53–55, glutamate 99, cysteine 102, and glutamate 107; that span reads GRG. Mg(2+) is bound by residues asparagine 199 and aspartate 213. Substrate contacts are provided by residues asparagine 264 and 321–323; that span reads GIM.

It belongs to the succinate/malate CoA ligase beta subunit family. In terms of assembly, heterotetramer of two alpha and two beta subunits. The cofactor is Mg(2+).

The enzyme catalyses succinate + ATP + CoA = succinyl-CoA + ADP + phosphate. It carries out the reaction GTP + succinate + CoA = succinyl-CoA + GDP + phosphate. It functions in the pathway carbohydrate metabolism; tricarboxylic acid cycle; succinate from succinyl-CoA (ligase route): step 1/1. Its function is as follows. Succinyl-CoA synthetase functions in the citric acid cycle (TCA), coupling the hydrolysis of succinyl-CoA to the synthesis of either ATP or GTP and thus represents the only step of substrate-level phosphorylation in the TCA. The beta subunit provides nucleotide specificity of the enzyme and binds the substrate succinate, while the binding sites for coenzyme A and phosphate are found in the alpha subunit. The chain is Succinate--CoA ligase [ADP-forming] subunit beta from Bacillus cereus (strain B4264).